The primary structure comprises 453 residues: Alpha-2B adrenergic receptor (453 aa).

At 1-17 (MSGPTMDHQEPYSVQAT) the chain is on the extracellular side. Residues 18-42 (AAIASAITFLILFTIFGNALVILAV) traverse the membrane as a helical segment. Topologically, residues 43–54 (LTSRSLRAPQNL) are cytoplasmic. Residues 55 to 80 (FLVSLAAADILVATLIIPFSLANELL) form a helical membrane-spanning segment. Topologically, residues 81-90 (GYWYFWRAWC) are extracellular. An intrachain disulfide couples Cys-90 to Cys-169. A helical transmembrane segment spans residues 91–113 (EVYLALDVLFCTSSIVHLCAISL). Residues 114–135 (DRYWAVSRALEYNSKRTPRRIK) are Cytoplasmic-facing. A helical membrane pass occupies residues 136 to 158 (CIILTVWLIAAVISLPPLIYKGD). Over 159–174 (QRPEPRGLPQCELNQE) the chain is Extracellular. The helical transmembrane segment at 175 to 198 (AWYILASSIGSFFAPCLIMILVYL) threads the bilayer. Topologically, residues 199–375 (RIYVIAKRSH…LSREKRFTFV (177 aa)) are cytoplasmic. A disordered region spans residues 213 to 331 (GAKRGSGEGE…PASVCNPPLQ (119 aa)). The segment covering 287–297 (GQGQKKGTSGA) has biased composition (polar residues). The span at 300–314 (EEGDEEDEEEVEECE) shows a compositional bias: acidic residues. The chain crosses the membrane as a helical span at residues 376–399 (LAVVIGVFVVCWFPFFFSYSLGAI). Over 400–408 (CPQHCKVPH) the chain is Extracellular. The helical transmembrane segment at 409–432 (GLFQFFFWIGYCNSSLNPVIYTVF) threads the bilayer. Residues 433–453 (NQDFRRAFRRILCRPWTQTGW) lie on the Cytoplasmic side of the membrane. Residue Cys-445 is the site of S-palmitoyl cysteine attachment.

It belongs to the G-protein coupled receptor 1 family. Adrenergic receptor subfamily. ADRA2B sub-subfamily. In terms of assembly, interacts with RAB26. Interacts with PPP1R9B. Interacts with GGA1, GGA2 and GGA3.

The protein localises to the cell membrane. Its function is as follows. Alpha-2 adrenergic receptors mediate the catecholamine-induced inhibition of adenylate cyclase through the action of G proteins. The polypeptide is Alpha-2B adrenergic receptor (Adra2b) (Rattus norvegicus (Rat)).